The following is a 122-amino-acid chain: Protein FLORAL ORGAN NUMBER2 (122 aa).

The N-terminal stretch at 1–25 is a signal peptide; that stretch reads MGRLFLCLVVAWCWVALLLVAPVHG. Positions 28–122 are disordered; sequence GLPGEFSGDQ…PEHARSTGRP (95 aa). Over residues 54–63 the composition is skewed to basic residues; the sequence is KQPRGVKGTR. Residues 64-77 show a composition bias toward low complexity; that stretch reads RPSWSSWSSTASRS. The span at 111–122 shows a compositional bias: basic and acidic residues; sequence RRPEHARSTGRP.

Belongs to the CLV3/ESR signal peptide family.

The protein localises to the secreted. Functionally, probable extracellular signal that regulates meristem maintenance. May function as a putative ligand for a receptor complex including FON1. Regulates the size of the floral meristem and the number of floral organs. This Oryza sativa subsp. indica (Rice) protein is Protein FLORAL ORGAN NUMBER2 (FON2).